The chain runs to 154 residues: Prefoldin subunit 2 (154 aa).

2 disordered regions span residues 1–20 and 126–154; these read MADS…GKGA and LMGE…VLVS. Gly residues predominate over residues 9-18; sequence GKSGGSGTGK. Over residues 126–139 the composition is skewed to basic and acidic residues; it reads LMGEDEKPAAKENS. Residues 141-154 are compositionally biased toward low complexity; it reads GAGAKSSSAGVLVS.

The protein belongs to the prefoldin subunit beta family. In terms of assembly, heterohexamer of two PFD-alpha type and four PFD-beta type subunits. Component of the PAQosome complex which is responsible for the biogenesis of several protein complexes and which consists of R2TP complex members RUVBL1, RUVBL2, RPAP3 and PIH1D1, URI complex members PFDN2, PFDN6, PDRG1, UXT and URI1 as well as ASDURF, POLR2E and DNAAF10/WDR92. Interacts with URI1; the interaction is phosphorylation-dependent and occurs in a growth-dependent manner.

Its subcellular location is the nucleus. It localises to the cytoplasm. The protein localises to the mitochondrion. Binds specifically to cytosolic chaperonin (c-CPN) and transfers target proteins to it. Binds to nascent polypeptide chain and promotes folding in an environment in which there are many competing pathways for nonnative proteins. This Rattus norvegicus (Rat) protein is Prefoldin subunit 2 (Pfdn2).